Consider the following 114-residue polypeptide: V-type proton ATPase subunit G (114 aa).

Serine 2 is modified (N-acetylserine).

This sequence belongs to the V-ATPase G subunit family. V-ATPase is a heteromultimeric enzyme composed of a peripheral catalytic V1 complex (components A to H) attached to an integral membrane V0 proton pore complex (components: a, c, c', c'', d, e, f and VOA1).

The protein localises to the vacuole membrane. Functionally, subunit of the V1 complex of vacuolar(H+)-ATPase (V-ATPase), a multisubunit enzyme composed of a peripheral complex (V1) that hydrolyzes ATP and a membrane integral complex (V0) that translocates protons. V-ATPase is responsible for acidifying and maintaining the pH of intracellular compartments. The protein is V-type proton ATPase subunit G of Saccharomyces cerevisiae (strain ATCC 204508 / S288c) (Baker's yeast).